The primary structure comprises 1007 residues: Lysosomal alpha-mannosidase (1007 aa).

Residues 1–47 (MGASVLPLGLGAGDCQSSSGRRMSACLPRTALSFLLSLLLATPGARA) form the signal peptide. Disulfide bonds link Cys53-Cys356 and Cys266-Cys271. Zn(2+) is bound by residues His70 and Asp72. Asn131 carries an N-linked (GlcNAc...) asparagine glycan. Asp194 is a binding site for Zn(2+). Asp194 (nucleophile) is an active-site residue. Asn308, Asn343, and Asn365 each carry an N-linked (GlcNAc...) asparagine glycan. 2 disulfides stabilise this stretch: Cys410/Cys470 and Cys491/Cys499. Residue His444 coordinates Zn(2+). Residues Asn495, Asn540, Asn639, Asn686, Asn760, and Asn927 are each glycosylated (N-linked (GlcNAc...) asparagine).

The protein belongs to the glycosyl hydrolase 38 family. Requires Zn(2+) as cofactor.

The protein resides in the lysosome. It carries out the reaction Hydrolysis of terminal, non-reducing alpha-D-mannose residues in alpha-D-mannosides.. Its function is as follows. Necessary for the catabolism of N-linked carbohydrates released during glycoprotein turnover. The chain is Lysosomal alpha-mannosidase (MAN2B1) from Cavia porcellus (Guinea pig).